Reading from the N-terminus, the 989-residue chain is Mediator of RNA polymerase II transcription subunit 24 (989 aa).

6 consecutive short sequence motifs (LXXLL motif) follow at residues 128 to 132 (LHWLL), 344 to 348 (LTPLL), 448 to 452 (LDLLL), 557 to 561 (LVALL), 788 to 792 (LPGLL), and 857 to 861 (LMRLL). A phosphoserine mark is found at Ser862 and Ser873.

It belongs to the Mediator complex subunit 24 family. Component of the Mediator complex, which is composed of MED1, MED4, MED6, MED7, MED8, MED9, MED10, MED11, MED12, MED13, MED13L, MED14, MED15, MED16, MED17, MED18, MED19, MED20, MED21, MED22, MED23, MED24, MED25, MED26, MED27, MED29, MED30, MED31, CCNC, CDK8 and CDC2L6/CDK11. The MED12, MED13, CCNC and CDK8 subunits form a distinct module termed the CDK8 module. Mediator containing the CDK8 module is less active than Mediator lacking this module in supporting transcriptional activation. Individual preparations of the Mediator complex lacking one or more distinct subunits have been variously termed ARC, CRSP, DRIP, PC2, SMCC and TRAP. Interacts with AR. Ubiquitous. Abundant in skeletal muscle, heart and placenta.

The protein localises to the nucleus. Its function is as follows. Component of the Mediator complex, a coactivator involved in the regulated transcription of nearly all RNA polymerase II-dependent genes. Mediator functions as a bridge to convey information from gene-specific regulatory proteins to the basal RNA polymerase II transcription machinery. Mediator is recruited to promoters by direct interactions with regulatory proteins and serves as a scaffold for the assembly of a functional preinitiation complex with RNA polymerase II and the general transcription factors. The protein is Mediator of RNA polymerase II transcription subunit 24 (MED24) of Homo sapiens (Human).